The chain runs to 224 residues: Germin-like protein 8-8 (224 aa).

The N-terminal stretch at 1-22 is a signal peptide; sequence MASPSFCLLAALLALVSWQAIA. A disulfide bond links cysteine 32 and cysteine 47. The region spanning 62-212 is the Cupin type-1 domain; that stretch reads AMLDTPRKTN…AFQVEKGTID (151 aa). A glycan (N-linked (GlcNAc...) asparagine) is linked at asparagine 76. Residues histidine 109, histidine 111, and glutamate 116 each contribute to the Mn(2+) site. Asparagine 135 carries N-linked (GlcNAc...) asparagine glycosylation. Histidine 157 is a binding site for Mn(2+).

It belongs to the germin family. Oligomer (believed to be a pentamer but probably hexamer).

It is found in the secreted. It localises to the extracellular space. Its subcellular location is the apoplast. Functionally, plays a role in broad-spectrum disease resistance. Probably has no oxalate oxidase activity even if the active site is conserved. This chain is Germin-like protein 8-8, found in Oryza sativa subsp. japonica (Rice).